Consider the following 810-residue polypeptide: Zinc finger CCCH domain-containing protein 11A (810 aa).

3 consecutive C3H1-type zinc fingers follow at residues 2–29 (PNQG…HCEA), 31–57 (IGNE…HMEI), and 60–86 (KRSE…HHNR). At serine 108 the chain carries Phosphoserine. Residues lysine 114 and lysine 124 each participate in a glycyl lysine isopeptide (Lys-Gly) (interchain with G-Cter in SUMO2) cross-link. At serine 132 the chain carries Phosphoserine. Disordered regions lie at residues 139 to 194 (MKVE…GLRV), 223 to 258 (KKMK…ENVR), 285 to 351 (GKRK…DKVN), and 367 to 432 (ERAS…TTCI). A Glycyl lysine isopeptide (Lys-Gly) (interchain with G-Cter in SUMO2) cross-link involves residue lysine 140. 2 positions are modified to phosphoserine: serine 149 and serine 171. A compositionally biased stretch (acidic residues) spans 160–175 (ADDDEDDDDQFSEEGD). Serine 290 bears the Phosphoserine mark. 2 stretches are compositionally biased toward basic and acidic residues: residues 309-322 (KKVE…DKTP) and 367-390 (ERAS…KTDD). Threonine 321 carries the post-translational modification Phosphothreonine. Residues 362–423 (EEILLERASQ…KHRQQEAERQ (62 aa)) are a coiled coil. The residue at position 370 (serine 370) is a Phosphoserine. Residues 391–402 (STSGARSSSTIR) show a composition bias toward polar residues. Over residues 417–432 (QQEAERQKSKKDTTCI) the composition is skewed to basic and acidic residues. Residue lysine 478 forms a Glycyl lysine isopeptide (Lys-Gly) (interchain with G-Cter in SUMO2) linkage. The disordered stretch occupies residues 482–549 (ALRVQQSSES…KEASGETTGV (68 aa)). Residues 486-498 (QQSSESSTSSPSQ) show a composition bias toward low complexity. Lysine 619 is covalently cross-linked (Glycyl lysine isopeptide (Lys-Gly) (interchain with G-Cter in SUMO2)). A disordered region spans residues 715 to 768 (TVPEAENPRDSLVLPPTQSSSDSSPPEVSGPSSSQMSMKTRRLSSASTGKPPLS). A compositionally biased stretch (low complexity) spans 729 to 748 (PPTQSSSDSSPPEVSGPSSS). The segment covering 749-762 (QMSMKTRRLSSAST) has biased composition (polar residues).

As to quaternary structure, interacts with TREX complex components THOC2, DDX39 and POLDIP3; the interactions are ATP-dependent. Interacts with PABPN1; this interaction retains ZC3H11A in nuclear speckles. Interacts with KPNA3.

The protein localises to the nucleus. It is found in the nucleus speckle. In terms of biological role, through its association with TREX complex components, may participate in the export and post-transcriptional coordination of selected mRNA transcripts, including those required to maintain the metabolic processes in embryonic cells. Binds RNA. Its function is as follows. (Microbial infection) Plays a role in efficient growth of several nuclear-replicating viruses such as HIV-1, influenza virus or herpes simplex virus 1/HHV-1. Required for efficient viral mRNA export. May be required for proper polyadenylation of adenovirus type 5/HAdV-5 capsid mRNA. The polypeptide is Zinc finger CCCH domain-containing protein 11A (ZC3H11A) (Homo sapiens (Human)).